Reading from the N-terminus, the 61-residue chain is DNA-directed RNA polymerase subunit Rpo6 (61 aa).

Belongs to the archaeal Rpo6/eukaryotic RPB6 RNA polymerase subunit family. Part of the RNA polymerase complex.

It is found in the cytoplasm. The enzyme catalyses RNA(n) + a ribonucleoside 5'-triphosphate = RNA(n+1) + diphosphate. DNA-dependent RNA polymerase (RNAP) catalyzes the transcription of DNA into RNA using the four ribonucleoside triphosphates as substrates. This chain is DNA-directed RNA polymerase subunit Rpo6, found in Methanothermobacter thermautotrophicus (strain ATCC 29096 / DSM 1053 / JCM 10044 / NBRC 100330 / Delta H) (Methanobacterium thermoautotrophicum).